A 220-amino-acid polypeptide reads, in one-letter code: Riboflavin kinase (220 aa).

The H-T-H motif-like stretch occupies residues 1–92 (METDDQYYRA…LSRILAIKNN (92 aa)). The interval 93-220 (VVITGTVTSG…GDRVSVEVYT (128 aa)) is riboflavin kinase. 102 to 107 (GMGEGR) contacts CDP. Residues threonine 131 and asparagine 133 each contribute to the Mg(2+) site. FMN is bound by residues threonine 188 and glutamate 195. Residue 200-203 (KYLR) participates in CDP binding.

This sequence belongs to the archaeal riboflavin kinase family. Mg(2+) is required as a cofactor.

The enzyme catalyses riboflavin + CTP = CDP + FMN + H(+). It functions in the pathway cofactor biosynthesis; FMN biosynthesis; FMN from riboflavin (CTP route): step 1/1. In terms of biological role, catalyzes the CTP-dependent phosphorylation of riboflavin (vitamin B2) to form flavin mononucleotide (FMN). This chain is Riboflavin kinase (ribK), found in Thermoplasma acidophilum (strain ATCC 25905 / DSM 1728 / JCM 9062 / NBRC 15155 / AMRC-C165).